The following is a 37-amino-acid chain: Large ribosomal subunit protein bL36c (37 aa).

It belongs to the bacterial ribosomal protein bL36 family.

It localises to the plastid. The protein localises to the chloroplast. In Lolium perenne (Perennial ryegrass), this protein is Large ribosomal subunit protein bL36c.